The chain runs to 82 residues: MGIKTLIIFFHIFILAVLSSNNIILTSGAEIKKFSYDHCFHLCVAGEYGSNECFVDCAQKGFWHGDCANRTEKDPIRCCCYN.

The signal sequence occupies residues 1 to 28 (MGIKTLIIFFHIFILAVLSSNNIILTSG). Disulfide bonds link Cys39/Cys80, Cys43/Cys67, Cys53/Cys78, and Cys57/Cys79.

This sequence belongs to the DEFL family.

Its subcellular location is the secreted. The polypeptide is Putative defensin-like protein 48 (Arabidopsis thaliana (Mouse-ear cress)).